The following is an 818-amino-acid chain: Hillarin (818 aa).

The LIM zinc-binding domain maps to serine 9–glycine 76. The segment at phenylalanine 97–lysine 141 is disordered. Residues serine 117–aspartate 137 show a composition bias toward polar residues. Positions glutamine 216–serine 272 form a coiled coil.

It belongs to the transglutaminase-like superfamily. As to quaternary structure, interacts with pnut. In terms of tissue distribution, localizes to the neuropil of the embryonic central nervous system (at protein level). Also detected in third instar larval brain (at protein level).

It localises to the cytoplasm. The protein resides in the cell cortex. The protein localises to the cleavage furrow. In terms of biological role, may act as a modulator of septin function during cytokinesis in the developing nervous system. The chain is Hillarin from Drosophila melanogaster (Fruit fly).